Reading from the N-terminus, the 213-residue chain is Glycerol-3-phosphate acyltransferase (213 aa).

5 consecutive transmembrane segments (helical) span residues 3–23 (ILLA…VVVS), 51–71 (KAAI…VWLA), 78–98 (DVAV…PVFF), 115–135 (AVHP…AFFF), and 140–160 (LAAL…FGTP).

Belongs to the PlsY family. Probably interacts with PlsX.

Its subcellular location is the cell inner membrane. It catalyses the reaction an acyl phosphate + sn-glycerol 3-phosphate = a 1-acyl-sn-glycero-3-phosphate + phosphate. Its pathway is lipid metabolism; phospholipid metabolism. Its function is as follows. Catalyzes the transfer of an acyl group from acyl-phosphate (acyl-PO(4)) to glycerol-3-phosphate (G3P) to form lysophosphatidic acid (LPA). This enzyme utilizes acyl-phosphate as fatty acyl donor, but not acyl-CoA or acyl-ACP. The protein is Glycerol-3-phosphate acyltransferase of Burkholderia cenocepacia (strain ATCC BAA-245 / DSM 16553 / LMG 16656 / NCTC 13227 / J2315 / CF5610) (Burkholderia cepacia (strain J2315)).